We begin with the raw amino-acid sequence, 305 residues long: UDP-3-O-acyl-N-acetylglucosamine deacetylase (305 aa).

Zn(2+) is bound by residues H79, H238, and D242. The active-site Proton donor is the H265.

It belongs to the LpxC family. Zn(2+) serves as cofactor.

It catalyses the reaction a UDP-3-O-[(3R)-3-hydroxyacyl]-N-acetyl-alpha-D-glucosamine + H2O = a UDP-3-O-[(3R)-3-hydroxyacyl]-alpha-D-glucosamine + acetate. The protein operates within glycolipid biosynthesis; lipid IV(A) biosynthesis; lipid IV(A) from (3R)-3-hydroxytetradecanoyl-[acyl-carrier-protein] and UDP-N-acetyl-alpha-D-glucosamine: step 2/6. Functionally, catalyzes the hydrolysis of UDP-3-O-myristoyl-N-acetylglucosamine to form UDP-3-O-myristoylglucosamine and acetate, the committed step in lipid A biosynthesis. The chain is UDP-3-O-acyl-N-acetylglucosamine deacetylase from Vibrio cholerae serotype O1 (strain ATCC 39541 / Classical Ogawa 395 / O395).